Consider the following 304-residue polypeptide: Glyceraldehyde-3-phosphate dehydrogenase 2 (304 aa).

NAD(+) contacts are provided by residues 1 to 2, D22, and R67; that span reads RI. Residues 138–140, T169, 198–199, and R221 each bind D-glyceraldehyde 3-phosphate; these read SCT and TG. C139 functions as the Nucleophile in the catalytic mechanism. N303 provides a ligand contact to NAD(+).

This sequence belongs to the glyceraldehyde-3-phosphate dehydrogenase family. In terms of assembly, homotetramer.

The protein resides in the cytoplasm. It catalyses the reaction D-glyceraldehyde 3-phosphate + phosphate + NAD(+) = (2R)-3-phospho-glyceroyl phosphate + NADH + H(+). It functions in the pathway carbohydrate degradation; glycolysis; pyruvate from D-glyceraldehyde 3-phosphate: step 1/5. This is Glyceraldehyde-3-phosphate dehydrogenase 2 (Gapdh2) from Drosophila subobscura (Fruit fly).